A 206-amino-acid polypeptide reads, in one-letter code: High frequency lysogenization protein HflD homolog (206 aa).

It belongs to the HflD family.

It localises to the cytoplasm. The protein resides in the cell inner membrane. The protein is High frequency lysogenization protein HflD homolog of Pseudomonas syringae pv. tomato (strain ATCC BAA-871 / DC3000).